The sequence spans 380 residues: MSEIALEAWGEHEALLLKPPRSPLSIPPPKPRTAVLFPRREGFYTELGGYLPEVRLRFETYGTLSRRRDNAVLVFHALTGSAHLAGTYDEETFRSLSPLEQAFGREGWWDSLVGPGRILDPALYYVVSANHLGSCYGSTGPLSLDPHTGRPYGRDFPPLTIRDLARAQARLLDHLGVEKAIVIGGSLGGMVALEFALMYPERVKKLVVLAAPARHGPWARAFNHLSRQAILQDPEYQKGNPAPKGMALARGIAMMSYRAPEGFEARWGAEPELGETYLDYQGEKFLRRFHAESYLVLSRAMDTHDVGRGRGGVEEALKRLRAIPSLFVGIDTDLLYPAWEVRQAAKAAGARYREIKSPHGHDAFLIETDQVEEILDAFLP.

In terms of domain architecture, AB hydrolase-1 spans 70 to 366 (NAVLVFHALT…SPHGHDAFLI (297 aa)). Serine 186 (nucleophile) is an active-site residue. Residue arginine 250 participates in substrate binding. Catalysis depends on residues aspartate 333 and histidine 361. Substrate is bound at residue aspartate 362.

It belongs to the AB hydrolase superfamily. MetX family. Homodimer.

It localises to the cytoplasm. It catalyses the reaction L-homoserine + acetyl-CoA = O-acetyl-L-homoserine + CoA. It functions in the pathway amino-acid biosynthesis; L-methionine biosynthesis via de novo pathway; O-acetyl-L-homoserine from L-homoserine: step 1/1. Functionally, transfers an acetyl group from acetyl-CoA to L-homoserine, forming acetyl-L-homoserine. This Thermus thermophilus (strain ATCC BAA-163 / DSM 7039 / HB27) protein is Homoserine O-acetyltransferase.